Consider the following 1723-residue polypeptide: Lys-gingipain HG66 (1723 aa).

The first 24 residues, 1-24 (MRKLLLLIAASLLGVGLYAQNAKI), serve as a signal peptide directing secretion. Residues 25–228 (KLDAPTTRTT…ETAYKQLFNR (204 aa)) constitute a propeptide that is removed on maturation. Ca(2+) is bound by residues Asp313, Asp337, Asp339, Phe341, and Glu343. His444 serves as the catalytic Proton donor. Cys477 serves as the catalytic Nucleophile. 2 residues coordinate Ca(2+): Phe482 and Glu491. The disordered stretch occupies residues 965–985 (DAPNGTPNPNPNPNPGTTTLS). Ca(2+) is bound by residues Ser987, Glu989, Asp1000, Asp1002, Asp1004, His1006, Ser1021, Gly1023, Asn1042, Asp1145, and Glu1146.

It belongs to the peptidase C25 family. Post-translationally, proteolytically cleaved into a catalytic subunit and three adhesins. Arg-gingipain is involved in this post-translational processing.

It is found in the secreted. The catalysed reaction is Endopeptidase with strict specificity for lysyl bonds.. Cysteine proteinase with a strong preference for substrates with Lys in the P1 position. Hydrolyzes bovine hemoglobin, bovine serum albumin, casein, human placental type I collagen and human IgA and IgG. Disrupts the functions of polymorphonuclear leukocytes. May act as a virulence factor in the development of peridontal disease. Involved in the coaggregation of P.gingivalis with other oral bacteria. The protein is Lys-gingipain HG66 of Porphyromonas gingivalis (Bacteroides gingivalis).